The chain runs to 240 residues: tRNA pseudouridine synthase B (240 aa).

D48 serves as the catalytic Nucleophile.

The protein belongs to the pseudouridine synthase TruB family. Type 1 subfamily.

The enzyme catalyses uridine(55) in tRNA = pseudouridine(55) in tRNA. In terms of biological role, responsible for synthesis of pseudouridine from uracil-55 in the psi GC loop of transfer RNAs. This is tRNA pseudouridine synthase B from Bacteroides thetaiotaomicron (strain ATCC 29148 / DSM 2079 / JCM 5827 / CCUG 10774 / NCTC 10582 / VPI-5482 / E50).